We begin with the raw amino-acid sequence, 155 residues long: HTH-type transcriptional regulator IscR (155 aa).

Residues 2–136 (KLSTKGRYAM…HQTRLSDIIK (135 aa)) enclose the HTH rrf2-type domain. A DNA-binding region (H-T-H motif) is located at residues 30 to 53 (LAEVSKRQDISLPYLEQLFVKLRR). Residues 141-145 (PCPAV) are heme regulatory motif (HRM). Cysteine 142 contributes to the [2Fe-2S] cluster binding site.

The cofactor is [2Fe-2S] cluster.

Its function is as follows. Regulates the transcription of several operons and genes involved in the biogenesis of Fe-S clusters and Fe-S-containing proteins. Functions as a transcriptional repressor of genes involved in iron metabolism by directly binding to the promoter region of genes preceded by the Iron-Rhodo-box motif. Binds to iscR and hemP promoter regions independently of an Fe-S cluster, but their transcriptional repression is Fe-S cluster-dependent. Seems to activate some target genes in a Fe-S cluster-independent manner. Negatively regulates its own transcription in the presence of iron only. The chain is HTH-type transcriptional regulator IscR from Cereibacter sphaeroides (strain ATCC 17023 / DSM 158 / JCM 6121 / CCUG 31486 / LMG 2827 / NBRC 12203 / NCIMB 8253 / ATH 2.4.1.) (Rhodobacter sphaeroides).